The primary structure comprises 314 residues: Olfactory receptor 51G2 (314 aa).

The Extracellular portion of the chain corresponds to 1–30 (MTLGSLGNSSSSVSATFLLSGIPGLERMHI). The N-linked (GlcNAc...) asparagine glycan is linked to Asn-8. Residues 31–51 (WISIPLCFMYLVSIPGNCTIL) traverse the membrane as a helical segment. The Cytoplasmic segment spans residues 52–59 (FIIKTERS). The chain crosses the membrane as a helical span at residues 60-80 (LHEPMYLFLSMLALIDLGLSL). Residues 81–104 (CTLPTVLGIFWVGAREISHDACFA) are Extracellular-facing. A disulfide bridge connects residues Cys-102 and Cys-194. The helical transmembrane segment at 105–125 (QLFFIHCFSFLESSVLLSMAF) threads the bilayer. Topologically, residues 126–144 (DRFVAICHPLHYVSILTNT) are cytoplasmic. A helical membrane pass occupies residues 145 to 165 (VIGRIGLVSLGRSVALIFPLP). The Extracellular segment spans residues 166 to 201 (FMLKRFPYCGSPVLSHSYCLHQEVMKLACADMKANS). The helical transmembrane segment at 202–222 (IYGMFVIVSTVGIDSLLILFS) threads the bilayer. Topologically, residues 223 to 242 (YALILRTVLSIASRAERFKA) are cytoplasmic. Residues 243–263 (LNTCVSHICAVLLFYTPMIGL) traverse the membrane as a helical segment. The Extracellular segment spans residues 264–278 (SVIHRFGKQAPHLVQ). A helical transmembrane segment spans residues 279-299 (VVMGFMYLLFPPVMNPIVYSV). At 300-314 (KTKQIRDRVTHAFCY) the chain is on the cytoplasmic side.

This sequence belongs to the G-protein coupled receptor 1 family.

The protein resides in the cell membrane. Its function is as follows. Odorant receptor. This chain is Olfactory receptor 51G2 (OR51G2), found in Homo sapiens (Human).